A 1032-amino-acid chain; its full sequence is Kinesin heavy chain isoform 5A (1032 aa).

A2 bears the N-acetylalanine mark. The region spanning 9–327 is the Kinesin motor domain; that stretch reads SIKVLCRFRP…LMFGQRAKTI (319 aa). Position 86–93 (86–93) interacts with ATP; the sequence is GQTSSGKT. Residues 174 to 315 are microtubule-binding; sequence VSGPEEILDV…PSSYNDAETK (142 aa). The necessary for interaction with ZFYVE27 stretch occupies residues 271 to 361; sequence EGTKSYVPYR…KTKAQKETIA (91 aa). The stretch at 331-906 forms a coiled coil; sequence ASVNLELTAE…VDRIKEAVRY (576 aa). An interaction with BICD2 region spans residues 353–1032; sequence TKAQKETIAK…FPLHQETAAS (680 aa). Residue T397 is modified to Phosphothreonine. The disordered stretch occupies residues 904–939; it reads VRYKSSGKRGHSAQIAKPVRPGHYPASSPTNPYGTR. The globular stretch occupies residues 907–1032; sequence KSSGKRGHSA…FPLHQETAAS (126 aa).

Belongs to the TRAFAC class myosin-kinesin ATPase superfamily. Kinesin family. Kinesin subfamily. As to quaternary structure, oligomer composed of two heavy chains and two light chains. Interacts with GRIP1. Interacts with FMR1 (via C-terminus); this interaction is increased in a mGluR-dependent manner. Interacts with BORCS5. Interacts with ZFYVE27. Interacts with VAPA, VAPB, SURF4, RAB11A (GDP-bound form), RAB11B (GDP-bound form) and RTN3 in a ZFYVE27-dependent manner. Interacts with BICD2. Interacts with DTNB.

The protein localises to the cytoplasm. It is found in the perinuclear region. It localises to the cytoskeleton. The protein resides in the perikaryon. The enzyme catalyses ATP + H2O + a kinesin associated with a microtubule at position (n) = ADP + phosphate a kinesin associated with a microtubule at position (n+1, toward the plus end).. Functionally, microtubule-dependent motor required for slow axonal transport of neurofilament proteins (NFH, NFM and NFL). Can induce formation of neurite-like membrane protrusions in non-neuronal cells in a ZFYVE27-dependent manner. The ZFYVE27-KIF5A complex contributes to the vesicular transport of VAPA, VAPB, SURF4, RAB11A, RAB11B and RTN3 proteins in neurons. Required for anterograde axonal transportation of MAPK8IP3/JIP3 which is essential for MAPK8IP3/JIP3 function in axon elongation. This Pongo abelii (Sumatran orangutan) protein is Kinesin heavy chain isoform 5A (KIF5A).